A 702-amino-acid chain; its full sequence is Dynein axonemal intermediate chain 1 (702 aa).

A disordered region spans residues 1-58; sequence MLPASSKMPHKQPPPPRKQSISMGRGARKRDEDSGTEVGEGTDEWVQSKATVKPPDQL. S134 and S137 each carry phosphoserine. 5 WD repeats span residues 383–423, 432–475, 540–580, 582–622, and 630–669; these read SSES…SQPS, KHTD…LVHT, AHNM…PMFI, DLNS…YEAI, and KKKNKLTHVQFNPIHPIIIVGDDRGHVTCLKLSPNLRKMP.

This sequence belongs to the dynein intermediate chain family. As to quaternary structure, consists of at least two heavy chains and a number of intermediate and light chains. Interacts with BICD2. Interacts with CFAP45 and CFAP52. Interacts with CFAP53.

It is found in the cytoplasm. The protein localises to the cytoskeleton. The protein resides in the cilium axoneme. Functionally, part of the dynein complex of respiratory cilia. The protein is Dynein axonemal intermediate chain 1 (DNAI1) of Bos taurus (Bovine).